The chain runs to 188 residues: Protein Cripto (188 aa).

The signal sequence occupies residues 1 to 30; sequence MDCRKMARFSYSVIWIMAISKVFELGLVAG. Residues 78 to 107 form the EGF-like domain; that stretch reads LNRTCCLNGGTCMLGSFCACPPSFYGRNCE. Residue Asn-79 is glycosylated (N-linked (GlcNAc...) asparagine). Cystine bridges form between Cys-82–Cys-89, Cys-83–Cys-95, Cys-97–Cys-106, Cys-115–Cys-133, Cys-128–Cys-149, and Cys-131–Cys-140. A lipid anchor (GPI-anchor amidated aspartate) is attached at Asp-150. Positions 151-188 are cleaved as a propeptide — removed in mature form; that stretch reads GLVMDEHLVASRTPELPPSARTTTFMLVGICLSIQSYY.

The protein belongs to the EGF-CFC (Cripto-1/FRL1/Cryptic) family. In terms of assembly, interacts with the activin type-1 receptor ACVR1B. The GPI-anchor is attached to the protein in the endoplasmic reticulum and serves to target the protein to the cell surface. There, it is processed by GPI processing phospholipase A2 (TMEM8A), removing an acyl-chain at the sn-2 position of GPI and releasing CRIPTO as a lysophosphatidylinositol-bearing form, which is further cleaved by phospholipase D (GPLD1) into a soluble form. As to expression, preferentially expressed in gastric and colorectal carcinomas than in their normal counterparts. Expressed in breast and lung.

It is found in the cell membrane. The protein localises to the secreted. In terms of biological role, GPI-anchored cell membrane protein involved in Nodal signaling. Cell-associated CRIPTO acts as a Nodal coreceptor in cis. Shedding of CRIPTO by TMEM8A modulates Nodal signaling by allowing soluble CRIPTO to act as a Nodal coreceptor on other cells. Could play a role in the determination of the epiblastic cells that subsequently give rise to the mesoderm. This is Protein Cripto from Homo sapiens (Human).